Reading from the N-terminus, the 96-residue chain is MRAYEVVYVLTPDLEEEQVEEKHNEFKSVIERYGGAPGEIDVWGKRRLAYEIDDYQEGIYALRKFQGENQVLTELERSLKMDESILRYLIARDEDA.

This sequence belongs to the bacterial ribosomal protein bS6 family.

Its function is as follows. Binds together with bS18 to 16S ribosomal RNA. The protein is Small ribosomal subunit protein bS6 of Natranaerobius thermophilus (strain ATCC BAA-1301 / DSM 18059 / JW/NM-WN-LF).